A 426-amino-acid polypeptide reads, in one-letter code: Serine--tRNA ligase (426 aa).

Residue 233 to 235 participates in L-serine binding; that stretch reads TAE. 264–266 contributes to the ATP binding site; the sequence is RAE. Position 287 (Glu287) interacts with L-serine. 351–354 is a binding site for ATP; sequence EISS. Residue Ser387 participates in L-serine binding.

Belongs to the class-II aminoacyl-tRNA synthetase family. Type-1 seryl-tRNA synthetase subfamily. Homodimer. The tRNA molecule binds across the dimer.

The protein resides in the cytoplasm. It catalyses the reaction tRNA(Ser) + L-serine + ATP = L-seryl-tRNA(Ser) + AMP + diphosphate + H(+). The enzyme catalyses tRNA(Sec) + L-serine + ATP = L-seryl-tRNA(Sec) + AMP + diphosphate + H(+). Its pathway is aminoacyl-tRNA biosynthesis; selenocysteinyl-tRNA(Sec) biosynthesis; L-seryl-tRNA(Sec) from L-serine and tRNA(Sec): step 1/1. Its function is as follows. Catalyzes the attachment of serine to tRNA(Ser). Is also able to aminoacylate tRNA(Sec) with serine, to form the misacylated tRNA L-seryl-tRNA(Sec), which will be further converted into selenocysteinyl-tRNA(Sec). In Clostridium kluyveri (strain NBRC 12016), this protein is Serine--tRNA ligase.